Here is a 366-residue protein sequence, read N- to C-terminus: MISSFHRPTVARVNLQAIKENVASVQKHIPLGVKTYAVVKADAYGHGAVQVSKALLPQVDGYCVSNLDEALQLRQAGIDKEILILGVLLPNELELAVANAITVTIASLDWIALARLEKKECQGLKVHVKVDSGMGRIGLRSSKEVNLLIDSLKELGADVEGIFTHFATADEADDTKFNQQLQFFKKLIAGLEDKPRLVHASNSATSIWHSDTIFNAVRLGIVSYGLNPSGSDLSLPFPLQEALSLESSLVHVKMISAGDTVGYGVTYTAKKSEYVGTVPIGYADGWTRNMQGFSVLVDGQFCEIIGRVSMDQLTIRLSKAYPLGTKVTLIGSNQQKNISTTDIANYRNTINYEVLCLLSDRIPRIY.

Residue Lys-40 is the Proton acceptor; specific for D-alanine of the active site. At Lys-40 the chain carries N6-(pyridoxal phosphate)lysine. Substrate is bound at residue Arg-136. Tyr-263 functions as the Proton acceptor; specific for L-alanine in the catalytic mechanism. Residue Met-310 coordinates substrate.

The protein belongs to the alanine racemase family. Requires pyridoxal 5'-phosphate as cofactor.

It catalyses the reaction L-alanine = D-alanine. Its pathway is amino-acid biosynthesis; D-alanine biosynthesis; D-alanine from L-alanine: step 1/1. Catalyzes the interconversion of L-alanine and D-alanine. May also act on other amino acids. This chain is Alanine racemase (alr), found in Streptococcus pyogenes serotype M12 (strain MGAS2096).